Reading from the N-terminus, the 560-residue chain is Oxygen-dependent choline dehydrogenase (560 aa).

Residue 6 to 35 (DYIIVGAGSAGCVLADRLSESGDHSVLLLE) coordinates FAD. His470 (proton acceptor) is an active-site residue.

Belongs to the GMC oxidoreductase family. FAD is required as a cofactor.

It carries out the reaction choline + A = betaine aldehyde + AH2. It catalyses the reaction betaine aldehyde + NAD(+) + H2O = glycine betaine + NADH + 2 H(+). The protein operates within amine and polyamine biosynthesis; betaine biosynthesis via choline pathway; betaine aldehyde from choline (cytochrome c reductase route): step 1/1. In terms of biological role, involved in the biosynthesis of the osmoprotectant glycine betaine. Catalyzes the oxidation of choline to betaine aldehyde and betaine aldehyde to glycine betaine at the same rate. The protein is Oxygen-dependent choline dehydrogenase of Vibrio vulnificus (strain YJ016).